A 489-amino-acid chain; its full sequence is Neuropeptide CCHamide-2 receptor (489 aa).

Over 1–74 the chain is Extracellular; sequence MYASLMDVGQ…DRPETYIVTV (74 aa). 2 N-linked (GlcNAc...) asparagine glycosylation sites follow: N25 and N50. The chain crosses the membrane as a helical span at residues 75-95; that stretch reads LYTLIFIVGVLGNGTLVIIFF. Residues 96–107 lie on the Cytoplasmic side of the membrane; sequence RHRSMRNIPNTY. A helical membrane pass occupies residues 108–128; the sequence is ILSLALADLLVILVCVPVATI. At 129-143 the chain is on the extracellular side; that stretch reads VYTQESWPFERNMCR. An intrachain disulfide couples C142 to C225. A helical membrane pass occupies residues 144-164; the sequence is ISEFFKDISIGVSVFTLTALS. The Cytoplasmic segment spans residues 165–184; it reads GERYCAIVNPLRKLQTKPLT. The chain crosses the membrane as a helical span at residues 185-205; that stretch reads VFTAVMIWILAILLGMPSVLF. Residues 206-235 lie on the Extracellular side of the membrane; the sequence is SDIKSYPVFTATGNMTIEVCSPFRDPEYAK. N219 carries an N-linked (GlcNAc...) asparagine glycan. Residues 236 to 256 form a helical membrane-spanning segment; sequence FMVAGKALVYYLLPLSIIGAL. Residues 257 to 293 are Cytoplasmic-facing; sequence YIMMAKRLHMSARNMPGEQQSMQSRTQARARLHVARM. The helical transmembrane segment at 294–314 threads the bilayer; that stretch reads VVAFVVVFFICFFPYHVFELW. The Extracellular portion of the chain corresponds to 315–333; sequence YHFYPTAEEDFDEFWNVLR. The chain crosses the membrane as a helical span at residues 334 to 354; the sequence is IVGFCTSFLNSCVNPVALYCV. At 355-489 the chain is on the cytoplasmic side; that stretch reads SGVFRQHFNR…NRYESGVMRY (135 aa). Residues 438–468 form a disordered region; that stretch reads SFHRQDSMPLQHGNAHGGGAGGGSSGLGAGG. A compositionally biased stretch (gly residues) spans 452 to 468; it reads AHGGGAGGGSSGLGAGG.

This sequence belongs to the G-protein coupled receptor 1 family. In terms of tissue distribution, highly expressed in larval brain. Also highly expressed in adult brain with very low levels in larval and adult gut.

It is found in the cell membrane. Functionally, receptor for the neuropeptide CCHamide-2. The protein is Neuropeptide CCHamide-2 receptor of Drosophila melanogaster (Fruit fly).